The chain runs to 232 residues: Thiamine import ATP-binding protein ThiQ (232 aa).

Residues 2–230 (LKLTDITWLY…KASASALLGI (229 aa)) form the ABC transporter domain. 32–39 (GPSGAGKS) contacts ATP.

Belongs to the ABC transporter superfamily. Thiamine importer (TC 3.A.1.19.1) family. In terms of assembly, the complex is composed of two ATP-binding proteins (ThiQ), two transmembrane proteins (ThiP) and a solute-binding protein (ThiB).

The protein localises to the cell inner membrane. The enzyme catalyses thiamine(out) + ATP + H2O = thiamine(in) + ADP + phosphate + H(+). Functionally, part of the ABC transporter complex ThiBPQ involved in thiamine import. Responsible for energy coupling to the transport system. The polypeptide is Thiamine import ATP-binding protein ThiQ (Escherichia coli (strain UTI89 / UPEC)).